Consider the following 378-residue polypeptide: UDP-N-acetylglucosamine--N-acetylmuramyl-(pentapeptide) pyrophosphoryl-undecaprenol N-acetylglucosamine transferase (378 aa).

UDP-N-acetyl-alpha-D-glucosamine is bound by residues 13-15, N124, R165, S193, and Q294; that span reads TGG.

Belongs to the glycosyltransferase 28 family. MurG subfamily.

The protein resides in the cell inner membrane. It carries out the reaction di-trans,octa-cis-undecaprenyl diphospho-N-acetyl-alpha-D-muramoyl-L-alanyl-D-glutamyl-meso-2,6-diaminopimeloyl-D-alanyl-D-alanine + UDP-N-acetyl-alpha-D-glucosamine = di-trans,octa-cis-undecaprenyl diphospho-[N-acetyl-alpha-D-glucosaminyl-(1-&gt;4)]-N-acetyl-alpha-D-muramoyl-L-alanyl-D-glutamyl-meso-2,6-diaminopimeloyl-D-alanyl-D-alanine + UDP + H(+). Its pathway is cell wall biogenesis; peptidoglycan biosynthesis. In terms of biological role, cell wall formation. Catalyzes the transfer of a GlcNAc subunit on undecaprenyl-pyrophosphoryl-MurNAc-pentapeptide (lipid intermediate I) to form undecaprenyl-pyrophosphoryl-MurNAc-(pentapeptide)GlcNAc (lipid intermediate II). In Agrobacterium fabrum (strain C58 / ATCC 33970) (Agrobacterium tumefaciens (strain C58)), this protein is UDP-N-acetylglucosamine--N-acetylmuramyl-(pentapeptide) pyrophosphoryl-undecaprenol N-acetylglucosamine transferase.